Here is a 402-residue protein sequence, read N- to C-terminus: Putative F-box protein At4g22180 (402 aa).

An F-box domain is found at 18-64 (PNSWSELPLDLLTAVFERLSYANFQRAKSVCSSWHSGSRQSVPIQIP).

This is Putative F-box protein At4g22180 from Arabidopsis thaliana (Mouse-ear cress).